The primary structure comprises 92 residues: Transcriptional regulator WhiB1 (92 aa).

In terms of domain architecture, 4Fe-4S Wbl-type spans 12–74 (ACRDKDPELF…GGLSEDERRA (63 aa)). Residues C13, C41, C44, and C50 each contribute to the [4Fe-4S] cluster site.

Belongs to the WhiB family. The cofactor is [4Fe-4S] cluster. Post-translationally, the Fe-S cluster can be nitrosylated by nitric oxide (NO). Upon Fe-S cluster removal intramolecular disulfide bonds are formed.

It is found in the cytoplasm. Its function is as follows. Acts as a transcriptional regulator. Probably redox-responsive. The apo- but not holo-form probably binds DNA. This Bifidobacterium longum (strain NCC 2705) protein is Transcriptional regulator WhiB1 (whiB1).